Here is a 680-residue protein sequence, read N- to C-terminus: Lipase 1 (680 aa).

An N-terminal signal peptide occupies residues 1-34 (MKSQNKYSIRKFSVGASSILIATLLFLSGGQAQA). Positions 35–290 (AEKQVNMGNS…AKAKDDQTNK (256 aa)) are excised as a propeptide. The tract at residues 82–259 (KNLHNDKTIS…PTKDNDKKNG (178 aa)) is disordered. Over residues 84–111 (LHNDKTISEENHRKTDDLNKDQLKDDKN) the composition is skewed to basic and acidic residues. Polar residues-rich tracts occupy residues 125-138 (KNNNANPSDVNQGL), 162-193 (SQDSNANNNLPSQSLTKEAPSLNKSDQTSQRE), and 204-223 (QPQQNNQANDKITNHNFNNE). Residues 224 to 234 (QEVKPQKDEKT) are compositionally biased toward basic and acidic residues. Residues 235 to 246 (LSVSDLKNNQKS) show a composition bias toward polar residues. Ser408 (nucleophile) is an active-site residue. The Charge relay system role is filled by Asp600. Asp638 serves as a coordination point for Ca(2+). His639 functions as the Charge relay system in the catalytic mechanism. Residues Asp641, Asp646, and Asp649 each contribute to the Ca(2+) site.

Belongs to the AB hydrolase superfamily. Lipase family.

It localises to the secreted. The enzyme catalyses a triacylglycerol + H2O = a diacylglycerol + a fatty acid + H(+). The protein is Lipase 1 (lip1) of Staphylococcus aureus (strain Mu50 / ATCC 700699).